Consider the following 324-residue polypeptide: Beta-ketoacyl-[acyl-carrier-protein] synthase III (324 aa).

Active-site residues include Cys-112 and His-251. Residues 252–256 (QANLR) form an ACP-binding region. Residue Asn-281 is part of the active site.

The protein belongs to the thiolase-like superfamily. FabH family. Homodimer.

Its subcellular location is the cytoplasm. The enzyme catalyses malonyl-[ACP] + acetyl-CoA + H(+) = 3-oxobutanoyl-[ACP] + CO2 + CoA. The protein operates within lipid metabolism; fatty acid biosynthesis. Catalyzes the condensation reaction of fatty acid synthesis by the addition to an acyl acceptor of two carbons from malonyl-ACP. Catalyzes the first condensation reaction which initiates fatty acid synthesis and may therefore play a role in governing the total rate of fatty acid production. Possesses both acetoacetyl-ACP synthase and acetyl transacylase activities. Its substrate specificity determines the biosynthesis of branched-chain and/or straight-chain of fatty acids. The polypeptide is Beta-ketoacyl-[acyl-carrier-protein] synthase III (Clostridium perfringens (strain 13 / Type A)).